Consider the following 411-residue polypeptide: Tyrosine--tRNA ligase (411 aa).

Residue Y33 participates in L-tyrosine binding. A 'HIGH' region motif is present at residues 38 to 47 (PTAESLHLGN). Residues Y160 and Q164 each contribute to the L-tyrosine site. A 'KMSKS' region motif is present at residues 222–226 (KIGKS). Residue K225 participates in ATP binding. The S4 RNA-binding domain occupies 347-411 (SVIETLIKNK…KKQVILFKTV (65 aa)).

Belongs to the class-I aminoacyl-tRNA synthetase family. TyrS type 1 subfamily. Homodimer.

Its subcellular location is the cytoplasm. It carries out the reaction tRNA(Tyr) + L-tyrosine + ATP = L-tyrosyl-tRNA(Tyr) + AMP + diphosphate + H(+). Functionally, catalyzes the attachment of tyrosine to tRNA(Tyr) in a two-step reaction: tyrosine is first activated by ATP to form Tyr-AMP and then transferred to the acceptor end of tRNA(Tyr). The polypeptide is Tyrosine--tRNA ligase (Mycoplasmopsis agalactiae (strain NCTC 10123 / CIP 59.7 / PG2) (Mycoplasma agalactiae)).